Consider the following 346-residue polypeptide: Methylthioribose-1-phosphate isomerase (346 aa).

Substrate-binding positions include R54–A56, R91, and Q192. Catalysis depends on D233, which acts as the Proton donor. N243–K244 serves as a coordination point for substrate.

This sequence belongs to the eIF-2B alpha/beta/delta subunits family. MtnA subfamily.

It carries out the reaction 5-(methylsulfanyl)-alpha-D-ribose 1-phosphate = 5-(methylsulfanyl)-D-ribulose 1-phosphate. It participates in amino-acid biosynthesis; L-methionine biosynthesis via salvage pathway; L-methionine from S-methyl-5-thio-alpha-D-ribose 1-phosphate: step 1/6. Catalyzes the interconversion of methylthioribose-1-phosphate (MTR-1-P) into methylthioribulose-1-phosphate (MTRu-1-P). The chain is Methylthioribose-1-phosphate isomerase from Yersinia enterocolitica serotype O:8 / biotype 1B (strain NCTC 13174 / 8081).